A 741-amino-acid chain; its full sequence is Methionine--tRNA ligase (741 aa).

The segment covering 1–22 (MTMKQYTMSKMNAETQTQTRES) has biased composition (polar residues). Residues 1–25 (MTMKQYTMSKMNAETQTQTRESFPT) are disordered. The short motif at 36 to 46 (PYANGDLHIGH) is the 'HIGH' region element. Cys-167, Cys-170, Cys-179, and Cys-183 together coordinate Zn(2+). Residues 309–329 (VRSHSSSSAKDSSEGNSPSNI) form a disordered region. A compositionally biased stretch (low complexity) spans 311–329 (SHSSSSAKDSSEGNSPSNI). Thr-381 is an ATP binding site. The tract at residues 591–629 (KLADRVTDPTDDDDSDTDTETGTDVAETTNESHSESNMT) is disordered. The segment covering 599 to 611 (PTDDDDSDTDTET) has biased composition (acidic residues). Residues 616–629 (AETTNESHSESNMT) are compositionally biased toward polar residues. A tRNA-binding domain is found at 643–741 (EFEELDLRVA…EDADPGTSIQ (99 aa)).

It belongs to the class-I aminoacyl-tRNA synthetase family. MetG type 1 subfamily. Homodimer. Zn(2+) serves as cofactor.

The protein localises to the cytoplasm. The enzyme catalyses tRNA(Met) + L-methionine + ATP = L-methionyl-tRNA(Met) + AMP + diphosphate. In terms of biological role, is required not only for elongation of protein synthesis but also for the initiation of all mRNA translation through initiator tRNA(fMet) aminoacylation. This Haloquadratum walsbyi (strain DSM 16790 / HBSQ001) protein is Methionine--tRNA ligase.